The sequence spans 175 residues: Apoptosis regulator Bcl-2 homolog (175 aa).

The helical transmembrane segment at 152-174 (YYVTRYFRVAAFIITSLAVINLF) threads the bilayer.

As to quaternary structure, interacts with host BAK1 and BAX as well as other BH3-containing proteins including BIM, BID or PUMA.

It localises to the host membrane. In terms of biological role, plays a role in the inhibition of host apoptosis. Interacts with host proapoptotic factors BAK1 and BAX to supposedly prevent their activation. This Canarypox virus (CNPV) protein is Apoptosis regulator Bcl-2 homolog (CNPV058).